Here is a 502-residue protein sequence, read N- to C-terminus: CBL-interacting serine/threonine-protein kinase 13 (502 aa).

Residues 32 to 51 form a disordered region; that stretch reads TNKETSTPESPRSPRTPQGS. Residues 35-48 are compositionally biased toward low complexity; sequence ETSTPESPRSPRTP. In terms of domain architecture, Protein kinase spans 57-311; sequence YEIGKLLGHG…IPEIMKHRWF (255 aa). ATP contacts are provided by residues 63-71 and Lys-86; that span reads LGHGSFAKV. Asp-179 serves as the catalytic Proton acceptor. The activation loop stretch occupies residues 197 to 226; it reads DFGLSVVSEQLKQEGICQTFCGTPAYLAPE. At Ser-201 the chain carries Phosphoserine. The residue at position 215 (Thr-215) is a Phosphothreonine. Positions 331–359 are disordered; the sequence is DDDNDDDDSSSLSSGRSSTASEGDAEFDI. Residues 340 to 352 show a composition bias toward low complexity; it reads SSLSSGRSSTASE. An NAF domain is found at 366-387; it reads PRPASLNAFDILSFSDLSGLFE. Residues 390 to 419 form a PPI region; it reads GQGARFVSAAPMTKIISKLEEIAKEVKFMV.

The protein belongs to the protein kinase superfamily. CAMK Ser/Thr protein kinase family. SNF1 subfamily. In terms of assembly, interacts with CBL2 and CBL3. The cofactor is Mn(2+).

It catalyses the reaction L-seryl-[protein] + ATP = O-phospho-L-seryl-[protein] + ADP + H(+). It carries out the reaction L-threonyl-[protein] + ATP = O-phospho-L-threonyl-[protein] + ADP + H(+). Its function is as follows. CIPK serine-threonine protein kinases interact with CBL proteins. Binding of a CBL protein to the regulatory NAF domain of CIPK protein lead to the activation of the kinase in a calcium-dependent manner. This is CBL-interacting serine/threonine-protein kinase 13 (CIPK13) from Arabidopsis thaliana (Mouse-ear cress).